Here is a 421-residue protein sequence, read N- to C-terminus: GTPase Obg (421 aa).

The 158-residue stretch at 1-158 (MYFIDEAINE…FKIKTELKIL (158 aa)) folds into the Obg domain. The OBG-type G domain occupies 159-324 (ADVGLIGYPS…LKYKMLEMIK (166 aa)). GTP is bound by residues 165–172 (GYPSVGKS), 190–194 (FTTLK), 211–214 (DLPG), 278–281 (NKMD), and 305–307 (SLL). Residues serine 172 and threonine 192 each contribute to the Mg(2+) site. The OCT domain maps to 342 to 421 (TLEEEKPDFV…ICDRVFEFIT (80 aa)).

The protein belongs to the TRAFAC class OBG-HflX-like GTPase superfamily. OBG GTPase family. Monomer. It depends on Mg(2+) as a cofactor.

The protein resides in the cytoplasm. In terms of biological role, an essential GTPase which binds GTP, GDP and possibly (p)ppGpp with moderate affinity, with high nucleotide exchange rates and a fairly low GTP hydrolysis rate. Plays a role in control of the cell cycle, stress response, ribosome biogenesis and in those bacteria that undergo differentiation, in morphogenesis control. This Phytoplasma mali (strain AT) protein is GTPase Obg.